We begin with the raw amino-acid sequence, 359 residues long: Type II methyltransferase M.HinfI (359 aa).

One can recognise an RAMA domain in the interval 275-358; the sequence is KVPMKTLIEA…LDSLRYEYTN (84 aa).

This sequence belongs to the N(4)/N(6)-methyltransferase family.

The enzyme catalyses a 2'-deoxyadenosine in DNA + S-adenosyl-L-methionine = an N(6)-methyl-2'-deoxyadenosine in DNA + S-adenosyl-L-homocysteine + H(+). In terms of biological role, a beta subtype methylase that recognizes the double-stranded sequence 5'-GANTC-3', methylates A-2 on both strands, and protects the DNA from cleavage by the HinfI endonuclease. The protein is Type II methyltransferase M.HinfI (hinfIM) of Haemophilus influenzae.